The following is a 361-amino-acid chain: tRNA 2-selenouridine synthase (361 aa).

The Rhodanese domain occupies 12–135; sequence VLKNIPLIDV…FRRYLIDHLE (124 aa). Cysteine 95 functions as the S-selanylcysteine intermediate in the catalytic mechanism.

It belongs to the SelU family. As to quaternary structure, monomer.

It catalyses the reaction 5-methylaminomethyl-2-thiouridine(34) in tRNA + selenophosphate + (2E)-geranyl diphosphate + H2O + H(+) = 5-methylaminomethyl-2-selenouridine(34) in tRNA + (2E)-thiogeraniol + phosphate + diphosphate. The enzyme catalyses 5-methylaminomethyl-2-thiouridine(34) in tRNA + (2E)-geranyl diphosphate = 5-methylaminomethyl-S-(2E)-geranyl-thiouridine(34) in tRNA + diphosphate. The catalysed reaction is 5-methylaminomethyl-S-(2E)-geranyl-thiouridine(34) in tRNA + selenophosphate + H(+) = 5-methylaminomethyl-2-(Se-phospho)selenouridine(34) in tRNA + (2E)-thiogeraniol. It carries out the reaction 5-methylaminomethyl-2-(Se-phospho)selenouridine(34) in tRNA + H2O = 5-methylaminomethyl-2-selenouridine(34) in tRNA + phosphate. In terms of biological role, involved in the post-transcriptional modification of the uridine at the wobble position (U34) of tRNA(Lys), tRNA(Glu) and tRNA(Gln). Catalyzes the conversion of 2-thiouridine (S2U-RNA) to 2-selenouridine (Se2U-RNA). Acts in a two-step process involving geranylation of 2-thiouridine (S2U) to S-geranyl-2-thiouridine (geS2U) and subsequent selenation of the latter derivative to 2-selenouridine (Se2U) in the tRNA chain. This Hydrogenovibrio crunogenus (strain DSM 25203 / XCL-2) (Thiomicrospira crunogena) protein is tRNA 2-selenouridine synthase.